A 332-amino-acid chain; its full sequence is 2,3-diketo-L-gulonate reductase (332 aa).

The active-site Proton donor is the His44. NAD(+)-binding positions include 168 to 174, 224 to 225, and 304 to 306; these read ITMVDMS, WK, and GHE.

The protein belongs to the LDH2/MDH2 oxidoreductase family. DlgD subfamily. Homodimer.

It localises to the cytoplasm. It carries out the reaction 3-dehydro-L-gulonate + NAD(+) = 2,3-dioxo-L-gulonate + NADH + H(+). It catalyses the reaction 3-dehydro-L-gulonate + NADP(+) = 2,3-dioxo-L-gulonate + NADPH + H(+). Functionally, catalyzes the reduction of 2,3-diketo-L-gulonate in the presence of NADH, to form 3-keto-L-gulonate. This is 2,3-diketo-L-gulonate reductase from Escherichia coli O8 (strain IAI1).